The chain runs to 272 residues: Indole-3-glycerol phosphate synthase (272 aa).

The protein belongs to the TrpC family.

It carries out the reaction 1-(2-carboxyphenylamino)-1-deoxy-D-ribulose 5-phosphate + H(+) = (1S,2R)-1-C-(indol-3-yl)glycerol 3-phosphate + CO2 + H2O. Its pathway is amino-acid biosynthesis; L-tryptophan biosynthesis; L-tryptophan from chorismate: step 4/5. This Paenarthrobacter aurescens (strain TC1) protein is Indole-3-glycerol phosphate synthase.